The following is a 354-amino-acid chain: DNA integrity scanning protein DisA (354 aa).

One can recognise a DAC domain in the interval 6 to 144 (GIGIKNVLKI…GDIKYVLRES (139 aa)). ATP contacts are provided by residues G73, L91, and 104–108 (TRHRT).

It belongs to the DisA family. As to quaternary structure, homooctamer. Requires Mg(2+) as cofactor.

It carries out the reaction 2 ATP = 3',3'-c-di-AMP + 2 diphosphate. Functionally, participates in a DNA-damage check-point that is active prior to asymmetric division when DNA is damaged. DisA forms globular foci that rapidly scan along the chromosomes during sporulation, searching for lesions. When a lesion is present, DisA pauses at the lesion site. This triggers a cellular response that culminates in a temporary block in sporulation initiation. In terms of biological role, also has diadenylate cyclase activity, catalyzing the condensation of 2 ATP molecules into cyclic di-AMP (c-di-AMP). c-di-AMP acts as a signaling molecule that couples DNA integrity with progression of sporulation. The rise in c-di-AMP level generated by DisA while scanning the chromosome, operates as a positive signal that advances sporulation; upon encountering a lesion, the DisA focus arrests at the damaged site and halts c-di-AMP synthesis. The sequence is that of DNA integrity scanning protein DisA from Clostridium beijerinckii (strain ATCC 51743 / NCIMB 8052) (Clostridium acetobutylicum).